The chain runs to 702 residues: Ribosomal RNA large subunit methyltransferase K/L (702 aa).

Residues 43-154 (LVYQSLMWSR…KETASIALDL (112 aa)) enclose the THUMP domain.

Belongs to the methyltransferase superfamily. RlmKL family.

Its subcellular location is the cytoplasm. The enzyme catalyses guanosine(2445) in 23S rRNA + S-adenosyl-L-methionine = N(2)-methylguanosine(2445) in 23S rRNA + S-adenosyl-L-homocysteine + H(+). It catalyses the reaction guanosine(2069) in 23S rRNA + S-adenosyl-L-methionine = N(2)-methylguanosine(2069) in 23S rRNA + S-adenosyl-L-homocysteine + H(+). Its function is as follows. Specifically methylates the guanine in position 2445 (m2G2445) and the guanine in position 2069 (m7G2069) of 23S rRNA. The chain is Ribosomal RNA large subunit methyltransferase K/L from Escherichia coli O157:H7.